The chain runs to 994 residues: Probable beta-galactosidase C (994 aa).

The signal sequence occupies residues 1-19; that stretch reads MKLQSILSCWAILVAQIWA. Tyr78 contributes to the substrate binding site. Asn88 carries N-linked (GlcNAc...) asparagine glycosylation. 4 residues coordinate substrate: Asn123, Ala124, Glu125, and Asn183. Glu184 acts as the Proton donor in catalysis. Tyr247 contacts substrate. A disulfide bridge links Cys253 with Cys301. A glycan (N-linked (GlcNAc...) asparagine) is linked at Asn272. Glu283 serves as the catalytic Nucleophile. Position 350 (Tyr350) interacts with substrate. 14 N-linked (GlcNAc...) asparagine glycosylation sites follow: Asn388, Asn407, Asn433, Asn500, Asn514, Asn521, Asn584, Asn600, Asn674, Asn712, Asn717, Asn757, Asn861, and Asn969.

It belongs to the glycosyl hydrolase 35 family.

The protein resides in the secreted. The catalysed reaction is Hydrolysis of terminal non-reducing beta-D-galactose residues in beta-D-galactosides.. Cleaves beta-linked terminal galactosyl residues from gangliosides, glycoproteins, and glycosaminoglycans. This chain is Probable beta-galactosidase C (lacC), found in Aspergillus niger (strain ATCC MYA-4892 / CBS 513.88 / FGSC A1513).